The primary structure comprises 451 residues: Tubulin gamma-1 chain (451 aa).

Residue S131 is modified to Phosphoserine; by BRSK1. 142-148 (AGGTGSG) provides a ligand contact to GTP.

It belongs to the tubulin family. Component of the gamma-tubulin ring complex (gTuRC) consisting of TUBGCP2, TUBGCP3, TUBGCP4, TUBGCP5 and TUBGCP6 and gamma-tubulin TUBG1 or TUBG2. TUBGCP2, TUBGCP3, TUBGCP4, TUBGCP5 and TUBGCP6 assemble in a 5:5:2:1:1 stoichiometry; each is associated with a gamma-tubulin, thereby arranging 14 gamma-tubulins in a helical manner. Gamma-tubulin at the first position is blocked by TUBGCP3 at the last position, allowing 13 protafilaments to grow into a microtubule. The gTuRC (via TUBGCP3 and TUBGCP6) interacts with ACTB and MZT1; the interactions form a luminal bridge that stabilizes the initial structure during complex assembly. The gTuRC (via TUBGCP2) interacts with MZT2A/MZT2B and CDK5RAP2 (via CM1 motif); the interactions play a role in gTuRC activation. Interacts with alpha-beta tubulin heterodimers; the interaction allows microtubules to nucleate from the gTuRC. Interacts with B9D2. Interacts with CDK5RAP2; the interaction is leading to centrosomal localization of TUBG1 and CDK5RAP2. Interacts with CIMAP3. Interacts with SAS6 and NUP62 at the centrosome. Interacts with EML3 (phosphorylated at 'Thr-881') and HAUS8. Interacts with DNM2; this interaction may participate in centrosome cohesion. Interacts with CCDC66. Post-translationally, phosphorylation at Ser-131 by BRSK1 regulates centrosome duplication, possibly by mediating relocation of gamma-tubulin and its associated proteins from the cytoplasm to the centrosome.

The protein resides in the cytoplasm. Its subcellular location is the cytoskeleton. The protein localises to the microtubule organizing center. It is found in the centrosome. It localises to the spindle. Its function is as follows. Tubulin is the major constituent of microtubules, protein filaments consisting of alpha- and beta-tubulin heterodimers. Gamma-tubulin is a key component of the gamma-tubulin ring complex (gTuRC) which mediates microtubule nucleation. The gTuRC regulates the minus-end nucleation of alpha-beta tubulin heterodimers that grow into microtubule protafilaments, a critical step in centrosome duplication and spindle formation. In Homo sapiens (Human), this protein is Tubulin gamma-1 chain.